The following is a 397-amino-acid chain: RNA polymerase II elongation factor ELL3 (397 aa).

Disordered regions lie at residues 164–219 and 237–284; these read VSDP…KRSV and VPSP…PEDI. The segment covering 168–178 has biased composition (polar residues); it reads LASNQGQSLPG. The span at 250–262 shows a compositional bias: acidic residues; that stretch reads QEGEDWEQEDEDM. The segment covering 269–281 has biased composition (low complexity); the sequence is SSSVQEDSESPSP. The OCEL domain occupies 285-395; the sequence is PDYLLQYRAI…LILEFEEKNR (111 aa).

Belongs to the ELL/occludin family. In terms of assembly, interacts with AFF4. Component of the super elongation complex (SEC), at least composed of EAF1, EAF2, CDK9, MLLT3/AF9, AFF (AFF1 or AFF4), the P-TEFb complex and ELL (ELL, ELL2 or ELL3). Component of the little elongation complex (LEC), at least composed of ELL (ELL, ELL2 or ELL3), ZC3H8, ICE1 and ICE2. As to expression, testis specific.

Its subcellular location is the nucleus. Enhancer-binding elongation factor that specifically binds enhancers in embryonic stem cells (ES cells), marks them, and is required for their future activation during stem cell specification. Does not only bind to enhancer regions of active genes, but also marks the enhancers that are in a poised or inactive state in ES cells and is required for establishing proper RNA polymerase II occupancy at developmentally regulated genes in a cohesin-dependent manner. Probably required for priming developmentally regulated genes for later recruitment of the super elongation complex (SEC), for transcriptional activation during differentiation. Required for recruitment of P-TEFb within SEC during differentiation. Probably preloaded on germ cell chromatin, suggesting that it may prime gene activation by marking enhancers as early as in the germ cells. Promoting epithelial-mesenchymal transition (EMT). Elongation factor component of the super elongation complex (SEC), a complex required to increase the catalytic rate of RNA polymerase II transcription by suppressing transient pausing by the polymerase at multiple sites along the DNA. Component of the little elongation complex (LEC), a complex required to regulate small nuclear RNA (snRNA) gene transcription by RNA polymerase II and III. The chain is RNA polymerase II elongation factor ELL3 (ELL3) from Homo sapiens (Human).